The primary structure comprises 434 residues: MRSTRNSFACLCIMLFGMLFVPFTLRAEEVGEYIAIRKEGASRIAVVLDKTSADGGKQREWARSLDVTINKGLDFTGLFNLLPAPLNIRNGQNGGLNFASIASVGGDIYAGGSVTKRSGRPVLEMHVYDSSGKSLLARTYTGEESQLRAIGLRFCADLVELLTGKRSVFGTRIVFVANRTGNKEIYMCDFDGENVVQLTNSRSISLTPAVSPDGTYIAWTDYTSGKPNLYIKNIATGAKVSVNKHGVCISPAWRPGTNTLVTTLSYEGDQDLYLIRADGTVERRLTKGGGIDVSPTFSPDGSKMAFVSTRQGGPQIFIQDMNSGQVRRLTYSGIYNTQPSWSPNGDKILYSSMQKSGEINIFSINVDGSGLLQLTSGSGNNEHPSWSPDGSMIVFSSTRDGRRRLYVMNADGSNQRPLLNMQGEQQQPSWSVSK.

Positions 1 to 27 (MRSTRNSFACLCIMLFGMLFVPFTLRA) are cleaved as a signal peptide. The interval 413-434 (SNQRPLLNMQGEQQQPSWSVSK) is disordered.

This sequence belongs to the TolB family.

It localises to the periplasm. This is Protein TolB homolog from Chlorobaculum tepidum (strain ATCC 49652 / DSM 12025 / NBRC 103806 / TLS) (Chlorobium tepidum).